Consider the following 842-residue polypeptide: Elongation factor 2 (842 aa).

The region spanning 17-253 (TNVRNMSVIA…LWGDSYFNPK (237 aa)) is the tr-type G domain. GTP-binding positions include 26–33 (AHVDHGKS), 158–161 (NKVD), and 213–215 (SGL). H699 is modified (diphthamide).

This sequence belongs to the TRAFAC class translation factor GTPase superfamily. Classic translation factor GTPase family. EF-G/EF-2 subfamily.

Its subcellular location is the cytoplasm. It carries out the reaction GTP + H2O = GDP + phosphate + H(+). In terms of biological role, catalyzes the GTP-dependent ribosomal translocation step during translation elongation. During this step, the ribosome changes from the pre-translocational (PRE) to the post-translocational (POST) state as the newly formed A-site-bound peptidyl-tRNA and P-site-bound deacylated tRNA move to the P and E sites, respectively. Catalyzes the coordinated movement of the two tRNA molecules, the mRNA and conformational changes in the ribosome. The protein is Elongation factor 2 (EFT1) of Kluyveromyces lactis (strain ATCC 8585 / CBS 2359 / DSM 70799 / NBRC 1267 / NRRL Y-1140 / WM37) (Yeast).